Consider the following 350-residue polypeptide: Glycerol-1-phosphate dehydrogenase [NAD(P)+] (350 aa).

Residues 94 to 98 (GKPID) and 116 to 119 (TVAS) each bind NAD(+). A substrate-binding site is contributed by aspartate 121. Residue serine 125 coordinates NAD(+). Aspartate 168 lines the substrate pocket. Residues aspartate 168 and histidine 248 each contribute to the Zn(2+) site. Histidine 252 is a binding site for substrate. Histidine 264 is a Zn(2+) binding site.

Belongs to the glycerol-1-phosphate dehydrogenase family. It depends on Zn(2+) as a cofactor.

Its subcellular location is the cytoplasm. The catalysed reaction is sn-glycerol 1-phosphate + NAD(+) = dihydroxyacetone phosphate + NADH + H(+). It catalyses the reaction sn-glycerol 1-phosphate + NADP(+) = dihydroxyacetone phosphate + NADPH + H(+). The protein operates within membrane lipid metabolism; glycerophospholipid metabolism. Its function is as follows. Catalyzes the NAD(P)H-dependent reduction of dihydroxyacetonephosphate (DHAP or glycerone phosphate) to glycerol 1-phosphate (G1P). The G1P thus generated is used as the glycerophosphate backbone of phospholipids in the cellular membranes of Archaea. The polypeptide is Glycerol-1-phosphate dehydrogenase [NAD(P)+] (Halorubrum lacusprofundi (strain ATCC 49239 / DSM 5036 / JCM 8891 / ACAM 34)).